A 130-amino-acid polypeptide reads, in one-letter code: Small ribosomal subunit protein uS8 (130 aa).

The protein belongs to the universal ribosomal protein uS8 family. Part of the 30S ribosomal subunit. Contacts proteins S5 and S12.

Functionally, one of the primary rRNA binding proteins, it binds directly to 16S rRNA central domain where it helps coordinate assembly of the platform of the 30S subunit. This is Small ribosomal subunit protein uS8 from Shewanella frigidimarina (strain NCIMB 400).